A 172-amino-acid chain; its full sequence is 3-hydroxydecanoyl-[acyl-carrier-protein] dehydratase (172 aa).

His-71 is a catalytic residue.

The protein belongs to the thioester dehydratase family. FabA subfamily. As to quaternary structure, homodimer.

It localises to the cytoplasm. It catalyses the reaction a (3R)-hydroxyacyl-[ACP] = a (2E)-enoyl-[ACP] + H2O. It carries out the reaction (3R)-hydroxydecanoyl-[ACP] = (2E)-decenoyl-[ACP] + H2O. The enzyme catalyses (2E)-decenoyl-[ACP] = (3Z)-decenoyl-[ACP]. It participates in lipid metabolism; fatty acid biosynthesis. Functionally, necessary for the introduction of cis unsaturation into fatty acids. Catalyzes the dehydration of (3R)-3-hydroxydecanoyl-ACP to E-(2)-decenoyl-ACP and then its isomerization to Z-(3)-decenoyl-ACP. Can catalyze the dehydratase reaction for beta-hydroxyacyl-ACPs with saturated chain lengths up to 16:0, being most active on intermediate chain length. The protein is 3-hydroxydecanoyl-[acyl-carrier-protein] dehydratase of Pectobacterium atrosepticum (strain SCRI 1043 / ATCC BAA-672) (Erwinia carotovora subsp. atroseptica).